Reading from the N-terminus, the 485-residue chain is Ribulose bisphosphate carboxylase large chain (485 aa).

Positions 1 to 2 (MS) are excised as a propeptide. At proline 3 the chain carries N-acetylproline. Lysine 14 carries the post-translational modification N6,N6,N6-trimethyllysine. 2 residues coordinate substrate: asparagine 123 and threonine 173. Lysine 175 (proton acceptor) is an active-site residue. Lysine 177 contacts substrate. Lysine 201, aspartate 203, and glutamate 204 together coordinate Mg(2+). Lysine 201 bears the N6-carboxylysine mark. The active-site Proton acceptor is the histidine 294. The substrate site is built by arginine 295, histidine 327, and serine 379.

It belongs to the RuBisCO large chain family. Type I subfamily. As to quaternary structure, heterohexadecamer of 8 large chains and 8 small chains; disulfide-linked. The disulfide link is formed within the large subunit homodimers. The cofactor is Mg(2+). In terms of processing, the disulfide bond which can form in the large chain dimeric partners within the hexadecamer appears to be associated with oxidative stress and protein turnover.

The protein resides in the plastid. It localises to the chloroplast. The catalysed reaction is 2 (2R)-3-phosphoglycerate + 2 H(+) = D-ribulose 1,5-bisphosphate + CO2 + H2O. It catalyses the reaction D-ribulose 1,5-bisphosphate + O2 = 2-phosphoglycolate + (2R)-3-phosphoglycerate + 2 H(+). Functionally, ruBisCO catalyzes two reactions: the carboxylation of D-ribulose 1,5-bisphosphate, the primary event in carbon dioxide fixation, as well as the oxidative fragmentation of the pentose substrate in the photorespiration process. Both reactions occur simultaneously and in competition at the same active site. This chain is Ribulose bisphosphate carboxylase large chain, found in Bartlettina sordida (Purple torch).